A 440-amino-acid polypeptide reads, in one-letter code: uncharacterized protein (440 aa).

A run of 12 helical transmembrane segments spans residues 24-44 (VVIGLGSMIGAGIFAALAPAA), 47-67 (AGSGLLLGLAVAAVVAYCNAI), 93-113 (FWGYLAGWGFVVGKTASCAAM), 117-137 (VGFYVWPAQAHAVAVAVVVAL), 155-175 (IVAVVLVVLTAVVVAAYGSGA), 183-203 (IGVDAHVWGMLQAAGLLFFAF), 229-249 (LALGITLAVYALVAVAVIAVL), 276-296 (VVQIGAAVAALGSLLALILGV), 323-343 (PFRAELVVGAVVAALAATADI), 346-366 (AIGFSSFGVLVYYAIANASAL), 379-399 (IPLVGLIGCVVLAFALPLSSV), and 400-420 (AAGAAVLGVGVAAYGVRRIIT).

The protein belongs to the amino acid-polyamine-organocation (APC) superfamily.

The protein resides in the cell membrane. Functionally, probable amino-acid or metabolite transport protein. This is an uncharacterized protein from Mycobacterium bovis (strain ATCC BAA-935 / AF2122/97).